The sequence spans 491 residues: Transcription factor unc-3 (491 aa).

The interval 66–69 (RKSN) is interaction with DNA. Residues 154 to 173 (CRVLLTHEVMCSRCCEKKSC) form a C5-type zinc finger. 2 interaction with DNA regions span residues 200–207 (NCLKNAGN) and 239–242 (NNSK). The tract at residues 240–261 (NSKHGRRTKRTDASDDSEYSES) is disordered. Residues 269 to 355 (PVIKALFPSE…SRGTPLRFSY (87 aa)) enclose the IPT/TIG domain.

It belongs to the COE family. In terms of assembly, may homodimerise. Interacts with jmjd-3.1. May interact with GFI1 homolog pag-3.

It is found in the nucleus. Transcription factor. Involved in motor neuron fate determination and maintenance, acting as an activator of gene expression in a subset of motor neurons. May act in concert with GFI1 homolog pag-3 in motor neuron fate determination. Required to maintain the expression of transcriptional repressors bnc-1 and cfi-1, which play roles in the cell fate of motor neurons. May play a role in the expression of proteins essential for axonal pathfinding and/or neuronal differentiation in both sensory and motor neurons. Cooperates with jmjd-3.1 and wdr-5.1 to ensure robust transdifferentiation of the Y rectal cell to the PDA motor neuron during larval development. This Caenorhabditis elegans protein is Transcription factor unc-3 (unc-3).